The primary structure comprises 46 residues: Large ribosomal subunit protein bL36B (46 aa).

It belongs to the bacterial ribosomal protein bL36 family.

In Cronobacter sakazakii (strain ATCC BAA-894) (Enterobacter sakazakii), this protein is Large ribosomal subunit protein bL36B.